Consider the following 137-residue polypeptide: 3-hydroxyacyl-[acyl-carrier-protein] dehydratase FabZ (137 aa).

Residue His-46 is part of the active site.

This sequence belongs to the thioester dehydratase family. FabZ subfamily.

It localises to the cytoplasm. The catalysed reaction is a (3R)-hydroxyacyl-[ACP] = a (2E)-enoyl-[ACP] + H2O. Its function is as follows. Involved in unsaturated fatty acids biosynthesis. Catalyzes the dehydration of short chain beta-hydroxyacyl-ACPs and long chain saturated and unsaturated beta-hydroxyacyl-ACPs. This Thermotoga neapolitana (strain ATCC 49049 / DSM 4359 / NBRC 107923 / NS-E) protein is 3-hydroxyacyl-[acyl-carrier-protein] dehydratase FabZ.